Reading from the N-terminus, the 191-residue chain is Guanylate kinase (191 aa).

The 179-residue stretch at 9–187 (GQLIVITGPS…SLIALETAIF (179 aa)) folds into the Guanylate kinase-like domain. 16 to 23 (GPSGVGKG) provides a ligand contact to ATP.

It belongs to the guanylate kinase family.

It localises to the cytoplasm. The catalysed reaction is GMP + ATP = GDP + ADP. Functionally, essential for recycling GMP and indirectly, cGMP. The chain is Guanylate kinase from Thermosynechococcus vestitus (strain NIES-2133 / IAM M-273 / BP-1).